The following is a 269-amino-acid chain: MEFIVLLTVCALLGLSCGQHGEYCHGWTDSYGIWRPGFQCPERYDPPEATFCCGSCGLKYCCSTVESRLDQGLCPNEEDLRDGVPSIELPPTVPTYFPFLLVGSIFVSFVILGSLVGLCCCKCLKPEDDTQVSGPAPIQSRLLDQDPSTDTSRHSSSSSASMPRPPIGARPQNLCSLGAENINLYMNMPPTFPMMGCPQNAQFMHPGTAGPSFMQPPFINYAVPAEHAIIMAPAPYIDARNCYGQTSNIYCQVPQQNDQTVCSGSPSKC.

The signal sequence occupies residues 1-18 (MEFIVLLTVCALLGLSCG). Topologically, residues 19-98 (QHGEYCHGWT…LPPTVPTYFP (80 aa)) are extracellular. The chain crosses the membrane as a helical span at residues 99-119 (FLLVGSIFVSFVILGSLVGLC). Topologically, residues 120–269 (CCKCLKPEDD…TVCSGSPSKC (150 aa)) are cytoplasmic. The tract at residues 129–167 (DTQVSGPAPIQSRLLDQDPSTDTSRHSSSSSASMPRPPI) is disordered. Low complexity predominate over residues 146–162 (DPSTDTSRHSSSSSASM).

The protein belongs to the shisa family. Interacts with immature forms of fzd8 and fgfr.

The protein localises to the endoplasmic reticulum. It localises to the membrane. In terms of biological role, required for head formation during gastrulation. Functions as an inhibitor for the caudalizing signals wnt and fgf, does not inhibit bmp, activin and nodal signaling in head formation process. Induces retention of fzd8 in the endoplasmic reticulum and inhibits trafficking of fzd8 to the cell surface. This Xenopus laevis (African clawed frog) protein is Protein shisa-1 (shisa1).